The primary structure comprises 493 residues: Endothelial lipase (493 aa).

Positions 1 to 23 (MRDPVFLLGFWSLYCCFPAGSLT) are cleaved as a signal peptide. Cysteines 66 and 79 form a disulfide. Residues asparagine 67 and asparagine 82 are each glycosylated (N-linked (GlcNAc...) asparagine). Serine 171 serves as the catalytic Nucleophile. The Charge relay system role is filled by aspartate 195. Cysteine 254 and cysteine 274 are oxidised to a cystine. Histidine 276 acts as the Charge relay system in catalysis. 2 disulfide bridges follow: cysteine 299–cysteine 318 and cysteine 310–cysteine 313. Heparin is bound at residue 327–339 (KMRKKRNSKMYLK). Residues 349 to 484 (YHYQLKVHMF…SPGQELWFYK (136 aa)) form the PLAT domain. A glycan (N-linked (GlcNAc...) asparagine) is linked at asparagine 395. Cysteine 465 and cysteine 485 form a disulfide bridge.

The protein belongs to the AB hydrolase superfamily. Lipase family. Head to tail Homodimer. Interacts with apolipoprotein C-2.

Its subcellular location is the secreted. It catalyses the reaction a triacylglycerol + H2O = a diacylglycerol + a fatty acid + H(+). The catalysed reaction is a 1,2-diacyl-sn-glycero-3-phosphocholine + H2O = a 2-acyl-sn-glycero-3-phosphocholine + a fatty acid + H(+). It carries out the reaction 1,2,3-tri-(9Z-octadecenoyl)-glycerol + H2O = di-(9Z)-octadecenoylglycerol + (9Z)-octadecenoate + H(+). The enzyme catalyses 1,2,3-tributanoylglycerol + H2O = dibutanoylglycerol + butanoate + H(+). It catalyses the reaction 1,2-dihexadecanoyl-sn-glycero-3-phosphocholine + H2O = hexadecanoyl-sn-glycero-3-phosphocholine + hexadecanoate + H(+). In terms of biological role, exerts both phospholipase and triglyceride lipase activities. More active as a phospholipase than a triglyceride lipase. Hydrolyzes triglycerides, both with short-chain fatty acyl groups (tributyrin) and long-chain fatty acyl groups (triolein) with similar levels of activity toward both types of substrates. Hydrolyzes high density lipoproteins (HDL) more efficiently than other lipoproteins. The chain is Endothelial lipase (Lipg) from Rattus norvegicus (Rat).